The chain runs to 185 residues: Ribosome-recycling factor (185 aa).

It belongs to the RRF family.

It is found in the cytoplasm. In terms of biological role, responsible for the release of ribosomes from messenger RNA at the termination of protein biosynthesis. May increase the efficiency of translation by recycling ribosomes from one round of translation to another. The protein is Ribosome-recycling factor of Baumannia cicadellinicola subsp. Homalodisca coagulata.